Here is a 62-residue protein sequence, read N- to C-terminus: Snaclec aspercetin subunit alpha (62 aa).

A disulfide bridge connects residues C2 and C13. In terms of domain architecture, C-type lectin spans 9–62 (YEGHCYRFFHPPKDWADAERFCTEQAKGGALVSIQRFGEEDFVSNLITKNLQRG).

It belongs to the snaclec family. Heterodimer; disulfide-linked. Expressed by the venom gland.

The protein localises to the secreted. Snaclec that binds to von Willebrand factor (VWF) and induces its interaction with GPIbalpha (GP1BA) (via the vWF A1 domain), resulting in platelet aggregation. Intravenous injection in mice induces a dose-dependent drop in platelet count (thrombocytopenia). Pretreatment by intravenous injection by this protein in mice potentiates the hemorrhagic lesion in the skin provoked by the metalloproteinase BaP1 intradermally injected. This result is not observed when both BaP1 and this protein are injected simultaneously. This Bothrops asper (Terciopelo) protein is Snaclec aspercetin subunit alpha.